We begin with the raw amino-acid sequence, 216 residues long: Pyrophosphatase PpaX (216 aa).

Aspartate 9 acts as the Nucleophile in catalysis.

The protein belongs to the HAD-like hydrolase superfamily. PpaX family. It depends on Mg(2+) as a cofactor.

It carries out the reaction diphosphate + H2O = 2 phosphate + H(+). Its function is as follows. Hydrolyzes pyrophosphate formed during P-Ser-HPr dephosphorylation by HPrK/P. Might play a role in controlling the intracellular pyrophosphate pool. The chain is Pyrophosphatase PpaX from Bacillus thuringiensis (strain Al Hakam).